Consider the following 452-residue polypeptide: Bifunctional protein GlmU (452 aa).

The pyrophosphorylase stretch occupies residues Met1–Arg231. UDP-N-acetyl-alpha-D-glucosamine is bound by residues Leu10 to Gly13, Lys24, Gln77, Gly82 to Thr83, Tyr105 to Asp107, Gly143, Glu157, Asn172, and Asn229. Position 107 (Asp107) interacts with Mg(2+). Asn229 contributes to the Mg(2+) binding site. Positions Ala232–Ser252 are linker. The tract at residues Gly253–Val452 is N-acetyltransferase. Arg318 and Lys336 together coordinate UDP-N-acetyl-alpha-D-glucosamine. The Proton acceptor role is filled by His348. Tyr351 and Asn362 together coordinate UDP-N-acetyl-alpha-D-glucosamine. Residues Ala365, Asn371–Tyr372, Ser390, Ser408, and Arg425 contribute to the acetyl-CoA site.

It in the N-terminal section; belongs to the N-acetylglucosamine-1-phosphate uridyltransferase family. The protein in the C-terminal section; belongs to the transferase hexapeptide repeat family. In terms of assembly, homotrimer. Requires Mg(2+) as cofactor.

The protein localises to the cytoplasm. It catalyses the reaction alpha-D-glucosamine 1-phosphate + acetyl-CoA = N-acetyl-alpha-D-glucosamine 1-phosphate + CoA + H(+). The catalysed reaction is N-acetyl-alpha-D-glucosamine 1-phosphate + UTP + H(+) = UDP-N-acetyl-alpha-D-glucosamine + diphosphate. Its pathway is nucleotide-sugar biosynthesis; UDP-N-acetyl-alpha-D-glucosamine biosynthesis; N-acetyl-alpha-D-glucosamine 1-phosphate from alpha-D-glucosamine 6-phosphate (route II): step 2/2. It functions in the pathway nucleotide-sugar biosynthesis; UDP-N-acetyl-alpha-D-glucosamine biosynthesis; UDP-N-acetyl-alpha-D-glucosamine from N-acetyl-alpha-D-glucosamine 1-phosphate: step 1/1. The protein operates within bacterial outer membrane biogenesis; LPS lipid A biosynthesis. Its function is as follows. Catalyzes the last two sequential reactions in the de novo biosynthetic pathway for UDP-N-acetylglucosamine (UDP-GlcNAc). The C-terminal domain catalyzes the transfer of acetyl group from acetyl coenzyme A to glucosamine-1-phosphate (GlcN-1-P) to produce N-acetylglucosamine-1-phosphate (GlcNAc-1-P), which is converted into UDP-GlcNAc by the transfer of uridine 5-monophosphate (from uridine 5-triphosphate), a reaction catalyzed by the N-terminal domain. The polypeptide is Bifunctional protein GlmU (Allorhizobium ampelinum (strain ATCC BAA-846 / DSM 112012 / S4) (Agrobacterium vitis (strain S4))).